A 303-amino-acid polypeptide reads, in one-letter code: MSFTVAVKEEILGQHHLSWHELSAIIKMSGSIGLSTSGLTLSVVTENAKLARHLYESFLHLYEIKSEIRHHQRSNLRKNRVYTVFTDEKVQDLLSDLHLADSFFGLETGIDEAILSDEEAGRAYLCGAFLANGSIRDPESGKYQLEISSVYLDHAQGIASLLQQFLLDAKVLERKKGAVTYLQRAEDIMDFLIVIGAMQARDDFERVKILRETRNDLNRANNAETANIARTVSASMKTINNISKIKDIMGLENLPVDLQEVAQLRIQHPDYSIQQLADSLSTPLTKSGVNHRLRKINKIADEL.

The H-T-H motif DNA-binding region spans 272 to 303; that stretch reads SIQQLADSLSTPLTKSGVNHRLRKINKIADEL.

Belongs to the WhiA family.

In terms of biological role, involved in cell division and chromosome segregation. This Streptococcus pneumoniae serotype 4 (strain ATCC BAA-334 / TIGR4) protein is Probable cell division protein WhiA.